A 253-amino-acid polypeptide reads, in one-letter code: MSVSVRVIPCLDVANGRVVKGVNFKNLRDAGDPVELAKRYDEEGADELTFLDVSASKEGRGTMLDVVRRTADQIFIPLTVGGGVRSVEDADALLRAGADKVSVNSSAVANPELLRELSTCFGAQCVVLSVDARRCDDQPSGYEVTTHGGTKSAGLDAVAWAKKGEELGVGEILLNSMDADGTKDGFDTEMLAAVREVVSIPVIASGGAGKASHFPPAVAAGANAVLAASIFHFGEVSIREVKDALGQDYEVRR.

Active-site residues include D12 and D131.

The protein belongs to the HisA/HisF family. In terms of assembly, heterodimer of HisH and HisF.

The protein resides in the cytoplasm. It catalyses the reaction 5-[(5-phospho-1-deoxy-D-ribulos-1-ylimino)methylamino]-1-(5-phospho-beta-D-ribosyl)imidazole-4-carboxamide + L-glutamine = D-erythro-1-(imidazol-4-yl)glycerol 3-phosphate + 5-amino-1-(5-phospho-beta-D-ribosyl)imidazole-4-carboxamide + L-glutamate + H(+). It functions in the pathway amino-acid biosynthesis; L-histidine biosynthesis; L-histidine from 5-phospho-alpha-D-ribose 1-diphosphate: step 5/9. In terms of biological role, IGPS catalyzes the conversion of PRFAR and glutamine to IGP, AICAR and glutamate. The HisF subunit catalyzes the cyclization activity that produces IGP and AICAR from PRFAR using the ammonia provided by the HisH subunit. This is Imidazole glycerol phosphate synthase subunit HisF from Corynebacterium urealyticum (strain ATCC 43042 / DSM 7109).